A 533-amino-acid chain; its full sequence is Acid-sensing ion channel 3 (533 aa).

The Cytoplasmic portion of the chain corresponds to 1 to 19 (MKPRSGLEEAQRRQASDIR). Residues 20–40 (VFASSCTMHGLGHIFGPGGLT) traverse the membrane as a helical segment. T40 bears the Phosphothreonine; by PKC mark. At 41-435 (LRRGLWATAV…EQKAAYEVSE (395 aa)) the chain is on the extracellular side. Cystine bridges form between C93-C187, C165-C172, C283-C372, C317-C368, C321-C366, C330-C352, and C332-C344. N176 is a glycosylation site (N-linked (GlcNAc...) asparagine). Residues 286–310 (ASLDPDDFDPEPSDPLGSPRPRPSP) are disordered. N-linked (GlcNAc...) asparagine glycosylation occurs at N400. Residues 436 to 456 (LLGDIGGQMGLFIGASLLTIL) form a helical membrane-spanning segment. Positions 449 to 451 (GAS) match the GAS motif; ion selectivity filter motif. The Cytoplasmic segment spans residues 457–533 (EILDYLCEVF…HRTCYLVTRL (77 aa)). The residue at position 523 (S523) is a Phosphoserine; by PKC. The short motif at 530-533 (VTRL) is the PDZ-binding element.

Belongs to the amiloride-sensitive sodium channel (TC 1.A.6) family. ASIC3 subfamily. Can form homotrimeric channels. Heterotrimer; forms functional heterotrimers producing channel with different properties. Forms heterotrimers with ASIC2; gives rise to a biphasic current with a sustained current which discriminates poorly between Na(+) and K(+). Interacts with STOM; inhibits ASIC3 acid-evoked current. Interacts with LIN7B (via PDZ domain); increases ASIC3 expression at the plasma membrane. Interacts with MAGI1 (via PDZ domain); probably regulates ASIC3. Interacts with GOPC (via PDZ domain); probably regulates ASIC3. Interacts with DLG4 (via PDZ domain); reduces ASIC3 expression at the plasma membrane. In terms of processing, could be phosphorylated by PKC, promoting activation of ASIC2/ASIC3 heterotrimers. In terms of tissue distribution, expressed in sciatic nerve and dorsal root ganglion (at protein level). Expressed in sensory neurons of dorsal root ganglion. Expressed in Golgi interneurons in the granular layer. Also found in superior cervical ganglia, spinal cord and brain stem.

The protein resides in the cell membrane. Its subcellular location is the cytoplasm. The catalysed reaction is Na(+)(in) = Na(+)(out). It catalyses the reaction K(+)(in) = K(+)(out). The enzyme catalyses Ca(2+)(in) = Ca(2+)(out). Inhibited by the diuretic drug amiloride. Inhibited by gadolinium ions. Inhibited by extracellular Ca(2+). Activated by lactate. Salicylic acid, diclofenac and aspirin inhibit the sustained current component. Activated by the vertebrate neuropeptides NPFF and NPSF, and the related FMRFamide. Specifically and reversibly inhibited by the a sea anemone toxin APETx2. ASIC3-containing channels are potentiated by the cono-RFamide CNF-Tx1.1, and probably CNF-Tx1.2 and CNF-Tx1.3 (AC P0DL71). Forms pH-gated heterotrimeric sodium channels that act as postsynaptic excitatory receptors in the nervous system. Upon extracellular acidification, these channels generate a biphasic current with a fast inactivating and a slow sustained phase. ASIC3 is more sensitive to protons and gates between closed, open, and desensitized states faster than other ASICs. Displays high selectivity for sodium ions but can also permit the permeation of other cations. As a neuronal acid sensor, probably contributes to mechanoreception, acid nociception, and heat nociception. By forming heterotrimeric channels with ASIC2, generates a biphasic current with a fast inactivating and a slow sustained phase, which in sensory neurons is proposed to mediate the pain induced by acidosis that occurs in ischemic, damaged or inflamed tissues. The polypeptide is Acid-sensing ion channel 3 (Rattus norvegicus (Rat)).